The primary structure comprises 316 residues: Initiation factor TFIIB homolog (316 aa).

It belongs to the asfivirus C315R family.

Putative initation factor. This Ornithodoros (relapsing fever ticks) protein is Initiation factor TFIIB homolog.